Consider the following 129-residue polypeptide: NADPH-dependent 7-cyano-7-deazaguanine reductase (129 aa).

Catalysis depends on C42, which acts as the Thioimide intermediate. D49 acts as the Proton donor in catalysis. Substrate is bound by residues 64-66 and 83-84; these read VEL and HE.

It belongs to the GTP cyclohydrolase I family. QueF type 1 subfamily.

The protein localises to the cytoplasm. It carries out the reaction 7-aminomethyl-7-carbaguanine + 2 NADP(+) = 7-cyano-7-deazaguanine + 2 NADPH + 3 H(+). It participates in tRNA modification; tRNA-queuosine biosynthesis. Catalyzes the NADPH-dependent reduction of 7-cyano-7-deazaguanine (preQ0) to 7-aminomethyl-7-deazaguanine (preQ1). The protein is NADPH-dependent 7-cyano-7-deazaguanine reductase of Synechococcus sp. (strain CC9605).